The sequence spans 1033 residues: Isoleucine--tRNA ligase 2 (1033 aa).

The 'HIGH' region signature appears at 47–57 (PTANGLPHVGH). Residues 590-594 (KMSKS) carry the 'KMSKS' region motif. Lys-593 contacts ATP.

Belongs to the class-I aminoacyl-tRNA synthetase family. IleS type 2 subfamily. As to quaternary structure, monomer. Zn(2+) is required as a cofactor.

The protein localises to the cytoplasm. It catalyses the reaction tRNA(Ile) + L-isoleucine + ATP = L-isoleucyl-tRNA(Ile) + AMP + diphosphate. Functionally, catalyzes the attachment of isoleucine to tRNA(Ile). As IleRS can inadvertently accommodate and process structurally similar amino acids such as valine, to avoid such errors it has two additional distinct tRNA(Ile)-dependent editing activities. One activity is designated as 'pretransfer' editing and involves the hydrolysis of activated Val-AMP. The other activity is designated 'posttransfer' editing and involves deacylation of mischarged Val-tRNA(Ile). The polypeptide is Isoleucine--tRNA ligase 2 (Bacillus cereus (strain ZK / E33L)).